The primary structure comprises 492 residues: ERAD-associated E3 ubiquitin-protein ligase HRD1A (492 aa).

The Cytoplasmic portion of the chain corresponds to methionine 1–arginine 3. Residues leucine 4–serine 24 form a helical membrane-spanning segment. Residues serine 25–lysine 40 are Lumenal-facing. The helical transmembrane segment at isoleucine 41–valine 61 threads the bilayer. Residues lysine 62–aspartate 98 lie on the Cytoplasmic side of the membrane. A helical membrane pass occupies residues phenylalanine 99–leucine 119. Over alanine 120 to lysine 135 the chain is Lumenal. A helical transmembrane segment spans residues leucine 136–methionine 156. Over tyrosine 157–serine 170 the chain is Cytoplasmic. The chain crosses the membrane as a helical span at residues valine 171 to valine 191. The Lumenal segment spans residues lysine 192–aspartate 221. The chain crosses the membrane as a helical span at residues leucine 222–proline 242. Over leucine 243–glutamate 492 the chain is Cytoplasmic. The RING-type; atypical zinc-finger motif lies at cysteine 292–arginine 330. Disordered stretches follow at residues alanine 339–serine 379 and glutamate 470–glutamate 492. The segment covering glutamine 351–leucine 378 has biased composition (low complexity). A compositionally biased stretch (basic and acidic residues) spans glutamate 470–serine 486.

The protein belongs to the HRD1 family.

It is found in the endoplasmic reticulum membrane. It carries out the reaction S-ubiquitinyl-[E2 ubiquitin-conjugating enzyme]-L-cysteine + [acceptor protein]-L-lysine = [E2 ubiquitin-conjugating enzyme]-L-cysteine + N(6)-ubiquitinyl-[acceptor protein]-L-lysine.. It participates in protein modification; protein ubiquitination. Its function is as follows. Probable component of the HRD1 ubiquitin ligase complex that mediates the rapid degradation of misfolded endoplasmic reticulum (ER) proteins, a process called ER-associated degradation (ERAD). Targets the misfolded LRR receptor kinase BRI1. Functions redundantly with HRD3B. This chain is ERAD-associated E3 ubiquitin-protein ligase HRD1A, found in Arabidopsis thaliana (Mouse-ear cress).